Here is a 381-residue protein sequence, read N- to C-terminus: Chaperone protein DnaJ (381 aa).

Residues 5-70 (DYYEVLGLQK…QKRAAYDQYG (66 aa)) enclose the J domain. Residues 133-211 (GTTKDIQINT…CHGEGRVHKK (79 aa)) form a CR-type zinc finger. 8 residues coordinate Zn(2+): Cys-146, Cys-149, Cys-163, Cys-166, Cys-185, Cys-188, Cys-199, and Cys-202. 4 CXXCXGXG motif repeats span residues 146–153 (CDSCGGSG), 163–170 (CPHCHGSG), 185–192 (CPTCHGSG), and 199–206 (CRSCHGEG).

It belongs to the DnaJ family. As to quaternary structure, homodimer. It depends on Zn(2+) as a cofactor.

The protein localises to the cytoplasm. Participates actively in the response to hyperosmotic and heat shock by preventing the aggregation of stress-denatured proteins and by disaggregating proteins, also in an autonomous, DnaK-independent fashion. Unfolded proteins bind initially to DnaJ; upon interaction with the DnaJ-bound protein, DnaK hydrolyzes its bound ATP, resulting in the formation of a stable complex. GrpE releases ADP from DnaK; ATP binding to DnaK triggers the release of the substrate protein, thus completing the reaction cycle. Several rounds of ATP-dependent interactions between DnaJ, DnaK and GrpE are required for fully efficient folding. Also involved, together with DnaK and GrpE, in the DNA replication of plasmids through activation of initiation proteins. This is Chaperone protein DnaJ from Haemophilus influenzae (strain 86-028NP).